A 305-amino-acid polypeptide reads, in one-letter code: FMRFamide-related peptides type HF-4 (305 aa).

Residues 1–19 form the signal peptide; the sequence is MTSLCLTIAPAVLSLICLS. Phenylalanine amide is present on residues Phe36, Phe47, and Phe66. Residue Ile75 is modified to Isoleucine amide. Residues Phe84 and Phe93 each carry the phenylalanine amide modification. Residue Ile102 is modified to Isoleucine amide. 7 positions are modified to phenylalanine amide: Phe111, Phe120, Phe129, Phe138, Phe147, Phe156, and Phe165. Residues 168-305 constitute a propeptide that is removed on maturation; sequence SVDGEIEAGV…EHKQEYMRFG (138 aa).

The protein belongs to the FARP (FMRFamide related peptide) family. Central nervous system.

The protein resides in the secreted. Its function is as follows. Can function as both cardioregulatory hormones and transmitters and may regulate cardiovascular function. In Cornu aspersum (Brown garden snail), this protein is FMRFamide-related peptides type HF-4.